We begin with the raw amino-acid sequence, 307 residues long: Polysialic acid O-acetyltransferase (307 aa).

Residues 1-90 (MLRLKTQDSR…LKTQDSRLKT (90 aa)) show a composition bias toward basic and acidic residues. Positions 1–95 (MLRLKTQDSR…SRLKTQDSFS (95 aa)) are disordered. A run of 13 repeats spans residues 3–9 (RLKTQDS), 10–16 (RLKTQDS), 17–23 (RLKTQDS), 24–30 (RLKTQDS), 31–37 (RLKTQDS), 38–44 (RLKTQDS), 45–51 (RLKTQDS), 52–58 (RLKTQDS), 59–65 (RLKTQDS), 66–72 (RLKTQDS), 73–79 (RLKTQDS), 80–86 (RLKTQDS), and 87–93 (RLKTQDS). A 13 X 7 AA tandem repeat of RLKTQDS encoded by a 7 nucleotide repeat region spans residues 3–93 (RLKTQDSRLK…QDSRLKTQDS (91 aa)). Residues 208–210 (DGH), R237, K243, K261, and K278 each bind acetyl-CoA.

Belongs to the transferase hexapeptide repeat family. Homotrimer. Hexamer formed by two homotrimers.

It carries out the reaction [N-acetyl-alpha-D-neuraminosyl-(2-&gt;8)](n) + n acetyl-CoA = [N,O(9)-diacetyl-alpha-D-neuraminosyl-(2-&gt;8)](n) + n CoA. The catalysed reaction is [N-acetyl-alpha-D-neuraminosyl-(2-&gt;8)](n) + n acetyl-CoA = [O(7),N-diacetyl-alpha-D-neuraminosyl-(2-&gt;8)](n) + n CoA. Its function is as follows. Catalyzes the O-acetylation of capsular polymeric sialic acid. Shows high substrate specificity toward polymers of sialic acid that contains a large number of residues. The polypeptide is Polysialic acid O-acetyltransferase (Escherichia coli O1:K1 / APEC).